A 209-amino-acid chain; its full sequence is uncharacterized protein (209 aa).

Residues Ser119 and His160 each act as charge relay system in the active site.

This sequence belongs to the peptidase S51 family.

This is an uncharacterized protein from Listeria innocua serovar 6a (strain ATCC BAA-680 / CLIP 11262).